The chain runs to 308 residues: ATP synthase gamma chain (308 aa).

Belongs to the ATPase gamma chain family. As to quaternary structure, F-type ATPases have 2 components, CF(1) - the catalytic core - and CF(0) - the membrane proton channel. CF(1) has five subunits: alpha(3), beta(3), gamma(1), delta(1), epsilon(1). CF(0) has three main subunits: a, b and c.

The protein resides in the cell membrane. Functionally, produces ATP from ADP in the presence of a proton gradient across the membrane. The gamma chain is believed to be important in regulating ATPase activity and the flow of protons through the CF(0) complex. This Mycobacteroides abscessus (strain ATCC 19977 / DSM 44196 / CCUG 20993 / CIP 104536 / JCM 13569 / NCTC 13031 / TMC 1543 / L948) (Mycobacterium abscessus) protein is ATP synthase gamma chain.